A 3176-amino-acid polypeptide reads, in one-letter code: Large tegument protein deneddylase (3176 aa).

Positions 1–12 (MSNGDWGQSQRP) are enriched in polar residues. Residues 1–28 (MSNGDWGQSQRPRGTGPMRGIRTMDVNA) form a disordered region. A deubiquitination activity region spans residues 1 to 268 (MSNGDWGQSQ…YEANGSGFDL (268 aa)). In terms of domain architecture, Peptidase C76 spans 41 to 258 (LGTASCNQAH…MLEHYGVYDF (218 aa)). Residues cysteine 61, aspartate 193, and histidine 195 contribute to the active site. The disordered stretch occupies residues 319-342 (PAARYSPAKTNSPPPSPASAAPAS). Repeat copies occupy residues 335-339 (PASAA), 340-344 (PASAA), 345-349 (PASAA), 350-354 (PASAA), and 355-359 (PASAA). Residues 335-384 (PASAAPASAAPASAAPASAAPASAAQASVAPASVAPASAAPASAAPDSAA) are 10 X 5 AA approximate repeats of P-A-S-A-A. The 6; approximate repeat unit spans residues 360–364 (QASVA). One copy of the 7; approximate repeat lies at 365–369 (PASVA). A run of 2 repeats spans residues 370-374 (PASAA) and 375-379 (PASAA). Residues 376-386 (ASAAPDSAAPA) show a composition bias toward low complexity. Disordered stretches follow at residues 376–683 (ASAA…GSGL), 928–950 (LLSG…SIYR), 1170–1193 (APIS…TPPL), 1435–1461 (LMET…RARE), 2610–3008 (GLVS…PGAR), and 3023–3043 (TYTV…KMPK). One copy of the 10; approximate repeat lies at 380-384 (PDSAA). The segment covering 457-488 (PRPPVPPHRPPSAARLPPPVIPIPHQSPPASP) has biased composition (pro residues). Low complexity predominate over residues 519–546 (AAPSNPEIPLTTPSPSPTAAAAPTATTL). A compositionally biased stretch (pro residues) spans 579–636 (APSPLLPQQQPPPSAAPAPSPLLPQQQPPPSAARAPSPLPPQQQPLPSATPAPPPAQQ). Residues 581–611 (SPLLPQQQPPPSAAPAPSPLLPQQQPPPSAA) are interaction with inner tegument protein. Over residues 1170–1182 (APISPASPSATPA) the composition is skewed to low complexity. Polar residues predominate over residues 2619–2630 (SADNTPASSDRL). Over residues 2643-2654 (EGSTTAESEASG) the composition is skewed to low complexity. Positions 2738–2747 (QPAPQQPPSS) are enriched in pro residues. Composition is skewed to polar residues over residues 2761-2772 (SPHSTPSTASGS) and 2811-2831 (SAAS…SSQD). Basic and acidic residues predominate over residues 2839-2854 (MQREKKQQGGREEAAE). Low complexity-rich tracts occupy residues 2872-2886 (APVV…ATPA) and 2901-2912 (APALGSGLAAPA).

The protein belongs to the herpesviridae large tegument protein family. Interacts with host CUL1 and CUL4A; these interactions inhibit the E3 ligase activity of cullins. Interacts with inner tegument protein. Interacts with capsid vertex specific component CVC2. Interacts with the major capsid protein/MCP. Interacts with host TRIM25 and YWHAZ.

It localises to the virion tegument. The protein localises to the host cytoplasm. The protein resides in the host nucleus. It carries out the reaction Thiol-dependent hydrolysis of ester, thioester, amide, peptide and isopeptide bonds formed by the C-terminal Gly of ubiquitin (a 76-residue protein attached to proteins as an intracellular targeting signal).. Its function is as follows. Large tegument protein that plays multiple roles in the viral cycle. During viral entry, remains associated with the capsid while most of the tegument is detached and participates in the capsid transport toward the host nucleus. Plays a role in the routing of the capsid at the nuclear pore complex and subsequent uncoating. Within the host nucleus, acts as a deneddylase and promotes the degradation of nuclear CRLs (cullin-RING ubiquitin ligases) and thereby stabilizes nuclear CRL substrates, while cytoplasmic CRLs remain unaffected. These modifications prevent host cell cycle S-phase progression and create a favorable environment allowing efficient viral genome replication. Participates later in the secondary envelopment of capsids. Indeed, plays a linker role for the association of the outer viral tegument to the capsids together with the inner tegument protein. Counteracts host TLR-mediated NF-kappa-B activation through both MYD88 and TICAM1-dependent pathways by interfering with 'Lys-63'- and 'Lys-48'-linked ubiquitination of signaling intermediates such as TRAF6 and IKBKG. Inhibits type I interferon production by forming a tri-molecular complex with host TRIM25 and 14-3-3 thereby promoting TRIM25 autoubiquitination and sequestration of the ligase into inactive protein aggregates. In turn, host RIGI is recruited to the complex but ubiquitination is severely impaired leading to inhibition of the pathway. Also catalyzes the removal of 'Lys-48'- and 'Lys-63'-linked ubiquitin chains on host TBK1 and STING1 suppressing cGAS-STING signaling in addition to the RIGI-MAVS pathway. Inhibits selective autophagy by deubiquitinating host SQSTM1. In turn, decreased SQSTM1 ubiquitination fails to recruit LC3 to SQSTM1-positive aggregates. In the host nucleus, deubiquitinates topoisomerase II subunits TOP2A and TOP2B thereby stabilizing SUMOylated TOP2 which halts the DNA damage response to TOP2-induced double strand DNA breaks and promotes cell survival. In Homo sapiens (Human), this protein is Large tegument protein deneddylase.